Reading from the N-terminus, the 364-residue chain is Beta-parvin (364 aa).

A disordered region spans residues 1-57 (MSSAPRSPTPRPRRMKKDESFLGKLGGTLARKRRAREVSDLQEEGKNAINSPMSPAL). Position 7 is a phosphoserine (serine 7). Residues 36 to 46 (REVSDLQEEGK) show a composition bias toward basic and acidic residues. Residue serine 54 is modified to Phosphoserine. Calponin-homology (CH) domains lie at 87–194 (KELV…MHFR) and 254–361 (SVVK…TKYK).

Belongs to the parvin family. Interacts with DYSF. Interacts with ILK, ARHGEF6, PXN (via LD motifs), ACTN2 and actin. As to expression, expressed predominantly in heart and skeletal muscle.

The protein localises to the cell junction. The protein resides in the focal adhesion. It is found in the cell membrane. Its subcellular location is the cytoplasm. It localises to the cytoskeleton. The protein localises to the cell projection. The protein resides in the lamellipodium. It is found in the myofibril. Its subcellular location is the sarcomere. It localises to the z line. Its function is as follows. Adapter protein that plays a role in integrin signaling via ILK and in activation of the GTPases CDC42 and RAC1 by guanine exchange factors, such as ARHGEF6. Is involved in the reorganization of the actin cytoskeleton and formation of lamellipodia. Plays a role in cell adhesion, cell spreading, establishment or maintenance of cell polarity, and cell migration. The sequence is that of Beta-parvin (PARVB) from Homo sapiens (Human).